A 499-amino-acid chain; its full sequence is Probable folate-biopterin transporter 2 (499 aa).

12 consecutive transmembrane segments (helical) span residues 43–63 (WSFVFGVVSLYGINQGLGGSL), 92–112 (IPWIIKPLWGILTDVLPIFGF), 116–136 (PYFILAGVLGVVSLLFISLHS), 141–161 (YLALFWMTISSAAMAIADVTI), 185–205 (LSSSIGALLGFFMSGILVHLV), 209–229 (GVFGLLTFPFALVSVVGIVFS), 266–286 (LYMYISLTLGLNIHEGLFYWF), 302–322 (FILSIGSIGSILAATLYQLVL), 330–350 (LCLWTQLLFALSGMLDLILVF), 354–374 (LKFGLPDYLFIVVDEIVSQMI), 399–419 (FALLMSIDNAGLMTSSWLGGI), and 435–455 (WLAVLVRNVMRLLPLCFLFLV).

The protein belongs to the major facilitator superfamily. Folate-biopterin transporter (TC 2.A.71) family.

It localises to the membrane. Functionally, could mediate folate transport. The protein is Probable folate-biopterin transporter 2 of Arabidopsis thaliana (Mouse-ear cress).